Reading from the N-terminus, the 613-residue chain is MHIHKLKAKIKKKHQEKYLTKKKIQKKLFLNESEFRRLCIFKGIYPKDYKDIPLKFRNKFYKNKVYYTRNDYKKLSNEKIIQDFRKIKTSLKRYKKYKITLEDNERCKNIIKNFPKYKLDHIIKERFPILVYAVEQLNDALTAIIAYSFLPSNENIGIKNNLINQSIILRNHVKGYYLQAEILQKKITWLIPHIFTPYFDKSIDFKIITNFIEYYVTLLRFILYKLYRLDGMSYPPKEYKDLKNEKLNHLSFDKNYITKELSNELETKESTEDNIIEENEKKTKNGKTENCEKNDQENEKKTKNDKTKNCEKNDQKNDQKNDQKNDQKNDQKNEMKQIEHDIIXNDNTKSVKNLFKNHIFYIHSNMPFDVLSIIILSCGGTICWNSLYSPYKYDDKSITHEILEVSEENKNTQDSNKINNINEYTYKRSFIQPQYIFDCLNSNMILSCEDYNINKTLPVHLSPFIDDDNYKDLVKKDEYTINKMLSEDPQYNKSIQKNKTNSENKXNNYNDNENDMSEDEYNNAIRQKLRNDALNNQMEAENENNYNPQNDLKQENDLLNVQKINNQENIKRNKLALSKKKRKLYNKIEQAENRQKLTIEKFIKKSKNKKKQK.

Residues 259-344 are a coiled coil; sequence KELSNELETK…MKQIEHDIIX (86 aa). Residues 268-333 form a disordered region; that stretch reads KESTEDNIIE…KNDQKNDQKN (66 aa). The span at 278–333 shows a compositional bias: basic and acidic residues; the sequence is ENEKKTKNGKTENCEKNDQENEKKTKNDKTKNCEKNDQKNDQKNDQKNDQKNDQKN. The BRCT domain maps to 350-453; it reads SVKNLFKNHI…MILSCEDYNI (104 aa). The tract at residues 485–517 is disordered; the sequence is LSEDPQYNKSIQKNKTNSENKXNNYNDNENDMS. The stretch at 492–601 forms a coiled coil; that stretch reads NKSIQKNKTN…ENRQKLTIEK (110 aa). The span at 497–511 shows a compositional bias: low complexity; it reads KNKTNSENKXNNYND.

This sequence belongs to the pescadillo family.

The protein resides in the nucleus. It is found in the nucleolus. Its subcellular location is the nucleoplasm. Its function is as follows. Required for maturation of ribosomal RNAs and formation of the large ribosomal subunit. In Plasmodium yoelii yoelii, this protein is Pescadillo homolog.